Here is a 234-residue protein sequence, read N- to C-terminus: Glucosamine-6-phosphate deaminase (234 aa).

Asp63 serves as the catalytic Proton acceptor; for enolization step. The active-site For ring-opening step is Asn129. His131 serves as the catalytic Proton acceptor; for ring-opening step. The active-site For ring-opening step is Glu136.

This sequence belongs to the glucosamine/galactosamine-6-phosphate isomerase family. NagB subfamily.

The catalysed reaction is alpha-D-glucosamine 6-phosphate + H2O = beta-D-fructose 6-phosphate + NH4(+). The protein operates within amino-sugar metabolism; N-acetylneuraminate degradation; D-fructose 6-phosphate from N-acetylneuraminate: step 5/5. Functionally, catalyzes the reversible isomerization-deamination of glucosamine 6-phosphate (GlcN6P) to form fructose 6-phosphate (Fru6P) and ammonium ion. This is Glucosamine-6-phosphate deaminase from Listeria monocytogenes serotype 4b (strain CLIP80459).